We begin with the raw amino-acid sequence, 1498 residues long: Transposon Ty3-I Gag-Pol polyprotein (1498 aa).

Residues 265–282 form a CCHC-type zinc finger; sequence RLCFYCKKEGHRLNECRA. Aspartate 336 functions as the For protease activity; shared with dimeric partner in the catalytic mechanism. The tract at residues 470-490 is disordered; it reads TDPKSAGNRGNPRNTKLSLAP. One can recognise a Reverse transcriptase domain in the interval 646 to 823; it reads LDNKFIVPSK…EETEFLGYSI (178 aa). Mg(2+)-binding residues include aspartate 712, aspartate 774, and aspartate 775. One can recognise an RNase H Ty3/gyspy-type domain in the interval 919-1037; it reads DASKDGIGAV…VADAISRAIY (119 aa). An integrase-type zinc finger-like region spans residues 1132–1171; the sequence is HTLFGGHFGVTVTLAKISPIYYWPKLQHSIIQYIRTCVQC. The Integrase catalytic domain occupies 1185–1350; that stretch reads LQPLPIAEGR…SPFEIDLGYL (166 aa). Mg(2+)-binding residues include aspartate 1201 and aspartate 1262.

The protease is a homodimer, whose active site consists of two apposed aspartic acid residues. Post-translationally, initially, virus-like particles (VLPs) are composed of the structural unprocessed proteins Gag and Gag-Pol, and also contain the host initiator methionine tRNA (tRNA(i)-Met) which serves as a primer for minus-strand DNA synthesis, and a dimer of genomic Ty RNA. Processing of the polyproteins occurs within the particle and proceeds by an ordered pathway, called maturation. First, the protease (PR) is released by autocatalytic cleavage of the Gag-Pol polyprotein, and this cleavage is a prerequisite for subsequent processing at the remaining sites to release the mature structural and catalytic proteins. Maturation takes place prior to the RT reaction and is required to produce transposition-competent VLPs.

The protein localises to the cytoplasm. It is found in the nucleus. It catalyses the reaction DNA(n) + a 2'-deoxyribonucleoside 5'-triphosphate = DNA(n+1) + diphosphate. It carries out the reaction Endonucleolytic cleavage to 5'-phosphomonoester.. In terms of biological role, capsid protein (CA) is the structural component of the virus-like particle (VLP), forming the shell that encapsulates the genomic RNA-nucleocapsid complex. Functionally, nucleocapsid protein p11 (NC) forms the nucleocore that coats the retro-elements dimeric RNA. Binds these RNAs through its zinc fingers. Promotes primer tRNA(i)-Met annealing to the multipartite primer-binding site (PBS), dimerization of Ty3 RNA and initiation of reverse transcription. The aspartyl protease (PR) mediates the proteolytic cleavages of the Gag and Gag-Pol polyproteins after assembly of the VLP. Its function is as follows. Reverse transcriptase/ribonuclease H (RT) is a multifunctional enzyme that catalyzes the conversion of the retro-elements RNA genome into dsDNA within the VLP. The enzyme displays a DNA polymerase activity that can copy either DNA or RNA templates, and a ribonuclease H (RNase H) activity that cleaves the RNA strand of RNA-DNA heteroduplexes during plus-strand synthesis and hydrolyzes RNA primers. The conversion leads to a linear dsDNA copy of the retrotransposon that includes long terminal repeats (LTRs) at both ends. In terms of biological role, integrase (IN) targets the VLP to the nucleus, where a subparticle preintegration complex (PIC) containing at least integrase and the newly synthesized dsDNA copy of the retrotransposon must transit the nuclear membrane. Once in the nucleus, integrase performs the integration of the dsDNA into the host genome. The polypeptide is Transposon Ty3-I Gag-Pol polyprotein (TY3B-I) (Saccharomyces cerevisiae (strain ATCC 204508 / S288c) (Baker's yeast)).